The primary structure comprises 180 residues: p-cumate 2,3-dioxygenase system, small oxygenase component (180 aa).

Belongs to the bacterial ring-hydroxylating dioxygenase beta subunit family. In terms of assembly, the p-cumate 2,3-dioxygenase multicomponent enzyme system is composed of an electron transfer component and a dioxygenase component (iron sulfur protein (ISP)). The electron transfer component is composed of a ferredoxin reductase (CmtAa) and a ferredoxin (CmtAd), and the dioxygenase component is formed of a large alpha subunit (CmtAb) and a small beta subunit (CmtAc).

It participates in aromatic compound metabolism; p-cumate degradation; acetaldehyde and pyruvate from p-cumate. Its function is as follows. Component of the p-cumate 2,3-dioxygenase multicomponent enzyme system which catalyzes the incorporation of both atoms of molecular oxygen into p-cumate to form cis-2,3-dihydroxy-2,3-dihydro-p-cumate. The beta subunit seems to have a structural role in the holoenzyme. Also able to catalyze the cis-dihydroxylation of indole-2-carboxylate and indole-3-carboxylate. This Pseudomonas putida (Arthrobacter siderocapsulatus) protein is p-cumate 2,3-dioxygenase system, small oxygenase component.